We begin with the raw amino-acid sequence, 201 residues long: Superoxide dismutase [Mn] (201 aa).

Residues histidine 27, histidine 81, aspartate 163, and histidine 167 each contribute to the Mn(2+) site.

Belongs to the iron/manganese superoxide dismutase family. As to quaternary structure, homodimer. It depends on Mn(2+) as a cofactor.

Its subcellular location is the secreted. It catalyses the reaction 2 superoxide + 2 H(+) = H2O2 + O2. Destroys superoxide anion radicals which are normally produced within the cells and which are toxic to biological systems. This Streptococcus pyogenes serotype M3 (strain ATCC BAA-595 / MGAS315) protein is Superoxide dismutase [Mn] (sodA).